We begin with the raw amino-acid sequence, 336 residues long: Holliday junction branch migration complex subunit RuvB (336 aa).

The tract at residues 4-184 (ADRIISAIAK…FGIVQRLEFY (181 aa)) is large ATPase domain (RuvB-L). ATP contacts are provided by residues I23, R24, G65, K68, T69, T70, 131 to 133 (EDY), R174, Y184, and R221. T69 contacts Mg(2+). Residues 185 to 255 (SIEDLTSIVM…IAKAALAMLD (71 aa)) form a small ATPAse domain (RuvB-S) region. Residues 258–336 (QAGFDYLDRK…HFGLAKLADK (79 aa)) form a head domain (RuvB-H) region. Residues R294, R313, and R318 each contribute to the DNA site.

Belongs to the RuvB family. As to quaternary structure, homohexamer. Forms an RuvA(8)-RuvB(12)-Holliday junction (HJ) complex. HJ DNA is sandwiched between 2 RuvA tetramers; dsDNA enters through RuvA and exits via RuvB. An RuvB hexamer assembles on each DNA strand where it exits the tetramer. Each RuvB hexamer is contacted by two RuvA subunits (via domain III) on 2 adjacent RuvB subunits; this complex drives branch migration. In the full resolvosome a probable DNA-RuvA(4)-RuvB(12)-RuvC(2) complex forms which resolves the HJ.

The protein resides in the cytoplasm. It carries out the reaction ATP + H2O = ADP + phosphate + H(+). In terms of biological role, the RuvA-RuvB-RuvC complex processes Holliday junction (HJ) DNA during genetic recombination and DNA repair, while the RuvA-RuvB complex plays an important role in the rescue of blocked DNA replication forks via replication fork reversal (RFR). RuvA specifically binds to HJ cruciform DNA, conferring on it an open structure. The RuvB hexamer acts as an ATP-dependent pump, pulling dsDNA into and through the RuvAB complex. RuvB forms 2 homohexamers on either side of HJ DNA bound by 1 or 2 RuvA tetramers; 4 subunits per hexamer contact DNA at a time. Coordinated motions by a converter formed by DNA-disengaged RuvB subunits stimulates ATP hydrolysis and nucleotide exchange. Immobilization of the converter enables RuvB to convert the ATP-contained energy into a lever motion, pulling 2 nucleotides of DNA out of the RuvA tetramer per ATP hydrolyzed, thus driving DNA branch migration. The RuvB motors rotate together with the DNA substrate, which together with the progressing nucleotide cycle form the mechanistic basis for DNA recombination by continuous HJ branch migration. Branch migration allows RuvC to scan DNA until it finds its consensus sequence, where it cleaves and resolves cruciform DNA. The protein is Holliday junction branch migration complex subunit RuvB of Actinobacillus succinogenes (strain ATCC 55618 / DSM 22257 / CCUG 43843 / 130Z).